The sequence spans 572 residues: AAA ATPase forming ring-shaped complexes (572 aa).

The segment at 1 to 22 (MTEPRHESGSAAPQRPATDPVQ) is disordered. A coiled-coil region spans residues 21–67 (VQRQVNLLRDQKRNLDKQAAALASQNEKLVRLLNASRQEIVGLKKTL). 270 to 275 (GNGKTL) lines the ATP pocket. Positions 527 to 539 (HEQQDLPDTEDSE) are enriched in acidic residues. A disordered region spans residues 527 to 572 (HEQQDLPDTEDSEDWARLTGRRGDTIDSVHMASHRPQGEPGPGATP).

Belongs to the AAA ATPase family. Homohexamer. Assembles into a hexameric ring structure.

This chain is AAA ATPase forming ring-shaped complexes, found in Kocuria rhizophila (strain ATCC 9341 / DSM 348 / NBRC 103217 / DC2201).